The following is a 299-amino-acid chain: ATP phosphoribosyltransferase (299 aa).

This sequence belongs to the ATP phosphoribosyltransferase family. Long subfamily. As to quaternary structure, equilibrium between an active dimeric form, an inactive hexameric form and higher aggregates. Interconversion between the various forms is largely reversible and is influenced by the natural substrates and inhibitors of the enzyme. Mg(2+) serves as cofactor.

It localises to the cytoplasm. The catalysed reaction is 1-(5-phospho-beta-D-ribosyl)-ATP + diphosphate = 5-phospho-alpha-D-ribose 1-diphosphate + ATP. Its pathway is amino-acid biosynthesis; L-histidine biosynthesis; L-histidine from 5-phospho-alpha-D-ribose 1-diphosphate: step 1/9. Its activity is regulated as follows. Feedback inhibited by histidine. Its function is as follows. Catalyzes the condensation of ATP and 5-phosphoribose 1-diphosphate to form N'-(5'-phosphoribosyl)-ATP (PR-ATP). Has a crucial role in the pathway because the rate of histidine biosynthesis seems to be controlled primarily by regulation of HisG enzymatic activity. The polypeptide is ATP phosphoribosyltransferase (Blochmanniella pennsylvanica (strain BPEN)).